The chain runs to 243 residues: Carboxy-S-adenosyl-L-methionine synthase (243 aa).

Residues Y40, 65–67, 90–91, 118–119, N133, and R200 each bind S-adenosyl-L-methionine; these read GCS, DN, and DI.

The protein belongs to the class I-like SAM-binding methyltransferase superfamily. Cx-SAM synthase family. Homodimer.

It carries out the reaction prephenate + S-adenosyl-L-methionine = carboxy-S-adenosyl-L-methionine + 3-phenylpyruvate + H2O. Catalyzes the conversion of S-adenosyl-L-methionine (SAM) to carboxy-S-adenosyl-L-methionine (Cx-SAM). The sequence is that of Carboxy-S-adenosyl-L-methionine synthase from Shewanella sediminis (strain HAW-EB3).